The sequence spans 488 residues: Rhamnulokinase (488 aa).

13-17 (ASSGR) contributes to the ATP binding site. A disulfide bridge links Cys-68 with Cys-222. Substrate-binding positions include Gly-83 and 236–238 (HDT). Asp-237 (proton acceptor) is an active-site residue. Residue Thr-259 coordinates ATP. Substrate is bound at residue Asn-296. Gln-304 serves as a coordination point for ATP. A disulfide bridge connects residues Cys-353 and Cys-370. Residue Gly-402 coordinates ATP. Cys-413 and Cys-417 are disulfide-bonded.

The protein belongs to the rhamnulokinase family. Mg(2+) is required as a cofactor.

It carries out the reaction L-rhamnulose + ATP = L-rhamnulose 1-phosphate + ADP + H(+). Its pathway is carbohydrate degradation; L-rhamnose degradation; glycerone phosphate from L-rhamnose: step 2/3. Functionally, involved in the catabolism of L-rhamnose (6-deoxy-L-mannose). Catalyzes the transfer of the gamma-phosphate group from ATP to the 1-hydroxyl group of L-rhamnulose to yield L-rhamnulose 1-phosphate. This is Rhamnulokinase from Klebsiella pneumoniae (strain 342).